The chain runs to 429 residues: Glutamate-1-semialdehyde 2,1-aminomutase (429 aa).

N6-(pyridoxal phosphate)lysine is present on Lys265.

Belongs to the class-III pyridoxal-phosphate-dependent aminotransferase family. HemL subfamily. Homodimer. Pyridoxal 5'-phosphate serves as cofactor.

Its subcellular location is the cytoplasm. It carries out the reaction (S)-4-amino-5-oxopentanoate = 5-aminolevulinate. It participates in porphyrin-containing compound metabolism; protoporphyrin-IX biosynthesis; 5-aminolevulinate from L-glutamyl-tRNA(Glu): step 2/2. The protein is Glutamate-1-semialdehyde 2,1-aminomutase of Chromohalobacter salexigens (strain ATCC BAA-138 / DSM 3043 / CIP 106854 / NCIMB 13768 / 1H11).